The following is a 21-amino-acid chain: Thanatin (21 aa).

Cys11 and Cys18 form a disulfide bridge.

Its subcellular location is the secreted. Functionally, insect defense peptide with a broad spectrum of activity against Gram-positive and Gram-negative bacteria and fungi. No activity against S.aureus. Stops respiration in bacteria but does not permeabilize their inner membranes. The sequence is that of Thanatin from Podisus maculiventris (Spined soldier bug).